An 837-amino-acid chain; its full sequence is Protein TRANSPARENT TESTA 9 (837 aa).

The 151-residue stretch at 42–192 (LRSIAEILTY…AVRALTLNVY (151 aa)) folds into the FPL domain. Residues 366 to 386 (TEEANQQCSSTAAGMSDDGNS) form a disordered region. Positions 368-378 (EANQQCSSTAA) are enriched in polar residues.

It belongs to the CLEC16A/gop-1 family.

It is found in the golgi apparatus membrane. Its function is as follows. Involved in membrane trafficking and vacuole development through membrane fusion at the vacuole. Required for membrane trafficking machinery and accumulation of flavonoids in the seed coat. The sequence is that of Protein TRANSPARENT TESTA 9 from Arabidopsis thaliana (Mouse-ear cress).